We begin with the raw amino-acid sequence, 879 residues long: Pentatricopeptide repeat-containing protein At1g71210, mitochondrial (879 aa).

The N-terminal 44 residues, 1–44, are a transit peptide targeting the mitochondrion; it reads MLRCWSVTVERSCEGMLLRRRILSLSASSFRNFTSGNNGDAIPF. PPR repeat units follow at residues 181–215, 216–246, 250–280, 285–319, 320–355, 356–390, 391–425, 426–460, 461–495, 496–530, 531–565, 566–597, 602–636, 637–667, 671–705, and 706–740; these read SLRL…GLDL, DSFG…ISVR, CAVT…LLPN, CGSG…GTVN, MDRA…GCEL, EVFR…GVSP, NKKT…GFAP, TAMS…GHFL, GGKT…DLLP, KRIA…GVDT, SFKM…GYTP, TRSL…FQLS, KVQA…GITP, TVAS…LREQ, KKRL…GLQP, and SIEC…GRRI.

The protein belongs to the PPR family. P subfamily.

It localises to the mitochondrion. The protein is Pentatricopeptide repeat-containing protein At1g71210, mitochondrial of Arabidopsis thaliana (Mouse-ear cress).